An 81-amino-acid polypeptide reads, in one-letter code: Small ribosomal subunit protein eS21 (81 aa).

Belongs to the eukaryotic ribosomal protein eS21 family.

This chain is Small ribosomal subunit protein eS21 (RPS21), found in Zea mays (Maize).